The following is a 117-amino-acid chain: NADPH-dependent 7-cyano-7-deazaguanine reductase (117 aa).

The active-site Thioimide intermediate is the Cys-31. The active-site Proton donor is the Asp-38. Substrate contacts are provided by residues Ile-53–Leu-55 and Tyr-72–Glu-73.

It belongs to the GTP cyclohydrolase I family. QueF type 1 subfamily.

It is found in the cytoplasm. The catalysed reaction is 7-aminomethyl-7-carbaguanine + 2 NADP(+) = 7-cyano-7-deazaguanine + 2 NADPH + 3 H(+). The protein operates within tRNA modification; tRNA-queuosine biosynthesis. In terms of biological role, catalyzes the NADPH-dependent reduction of 7-cyano-7-deazaguanine (preQ0) to 7-aminomethyl-7-deazaguanine (preQ1). The polypeptide is NADPH-dependent 7-cyano-7-deazaguanine reductase (Chlorobaculum tepidum (strain ATCC 49652 / DSM 12025 / NBRC 103806 / TLS) (Chlorobium tepidum)).